A 390-amino-acid chain; its full sequence is Glutamyl-tRNA reductase (390 aa).

Substrate contacts are provided by residues Thr46–Arg49, Ser96, Glu101–Gln103, and Gln107. Residue Cys47 is the Nucleophile of the active site. Gly176–Ala181 contacts NADP(+).

It belongs to the glutamyl-tRNA reductase family. As to quaternary structure, homodimer.

It carries out the reaction (S)-4-amino-5-oxopentanoate + tRNA(Glu) + NADP(+) = L-glutamyl-tRNA(Glu) + NADPH + H(+). It participates in porphyrin-containing compound metabolism; protoporphyrin-IX biosynthesis; 5-aminolevulinate from L-glutamyl-tRNA(Glu): step 1/2. Catalyzes the NADPH-dependent reduction of glutamyl-tRNA(Glu) to glutamate 1-semialdehyde (GSA). This chain is Glutamyl-tRNA reductase, found in Thermus thermophilus (strain ATCC 27634 / DSM 579 / HB8).